The sequence spans 218 residues: UPF0598 protein C8orf82 homolog (218 aa).

This sequence belongs to the UPF0598 family.

In Mus musculus (Mouse), this protein is UPF0598 protein C8orf82 homolog.